The sequence spans 207 residues: MLNTLTRLLDDAGITLPEHQKAQLVAYVDMLNKWNKAYNLTSVRDPNEMLVRHIMDSIVVEPHLKGTRFIDVGTGPGLPGIPLAIVRPDSHFTLLDSLGKRVRFLRQVQHELKLDNITPVQSRVEAFPAEPPFDGVISRAFASLSDMVNWCHHLPGEEGRFYALKGQRPDDEISALPSGFAVEEIVRLSVPRLDGERHLVILKANRT.

S-adenosyl-L-methionine contacts are provided by residues glycine 73, leucine 78, 124 to 125, and arginine 139; that span reads VE.

It belongs to the methyltransferase superfamily. RNA methyltransferase RsmG family.

It localises to the cytoplasm. It carries out the reaction guanosine(527) in 16S rRNA + S-adenosyl-L-methionine = N(7)-methylguanosine(527) in 16S rRNA + S-adenosyl-L-homocysteine. Its function is as follows. Specifically methylates the N7 position of guanine in position 527 of 16S rRNA. In Cronobacter sakazakii (strain ATCC BAA-894) (Enterobacter sakazakii), this protein is Ribosomal RNA small subunit methyltransferase G.